We begin with the raw amino-acid sequence, 80 residues long: Serine rich endogenous peptide 18 (80 aa).

The signal sequence occupies residues 1 to 25 (MYNVVVCLLTLSFLLLTGLSNTAEA). Positions 45–59 (KAEVGGSCSPHAHGR) match the SCOOP motif motif. The interval 50–80 (GSCSPHAHGRGPPNRPGSSNIPGSPKRCTKP) is disordered. Residues 51-53 (SCS) carry the SxS motif essential for MIK2 binding motif.

It belongs to the serine rich endogenous peptide (SCOOP) phytocytokine family. Interacts with MIK2 (via extracellular leucine-rich repeat domain); this interaction triggers the formation of complex between MIK2 and the BAK1/SERK3 and SERK4 coreceptors, and subsequent BAK1 activation by phosphorylation.

It localises to the cell membrane. The protein resides in the secreted. The protein localises to the extracellular space. It is found in the apoplast. Brassicaceae-specific phytocytokine (plant endogenous peptide released into the apoplast) perceived by MIK2 in a BAK1/SERK3 and SERK4 coreceptors-dependent manner, that modulates various physiological and antimicrobial processes including growth prevention and reactive oxygen species (ROS) response regulation. This chain is Serine rich endogenous peptide 18, found in Arabidopsis thaliana (Mouse-ear cress).